The sequence spans 896 residues: C-type lectin domain-containing protein 180 (896 aa).

An N-terminal signal peptide occupies residues 1–18 (MRHLIFTGFVLTLTALEA). The C-type lectin domain maps to 54-178 (PWGDLYQFRA…CESTSPDHHA (125 aa)). Residue Asn133 is glycosylated (N-linked (GlcNAc...) asparagine). Cys154 and Cys169 form a disulfide bridge. N-linked (GlcNAc...) asparagine glycosylation is found at Asn221 and Asn235. Disordered regions lie at residues 243–264 (STVK…SVSK), 354–436 (VKQE…LAPE), 492–519 (EKLE…EEQK), and 557–809 (KVKA…TTKP). Acidic residues predominate over residues 250–260 (SEEETSSEEEE). Composition is skewed to basic and acidic residues over residues 354 to 382 (VKQE…KISE) and 395 to 406 (DMPKADIEPPKE). The segment covering 407–426 (EDCDEEGSGSGSGEEDEKDE) has biased composition (acidic residues). Over residues 427 to 436 (SSEKIELAPE) the composition is skewed to basic and acidic residues. 3 stretches are compositionally biased toward basic and acidic residues: residues 575 to 590 (KSAK…KVGN), 607 to 663 (QNRE…ETKL), and 683 to 692 (EEPKSDKDSE). A compositionally biased stretch (low complexity) spans 727–739 (STTTESTTVAVKE). Residues 740 to 768 (VPVDEIEKIAKLEAKQHTEDEKVTVETKQ) are compositionally biased toward basic and acidic residues. The segment covering 773-809 (TPAPTTSEKTSTTAAPSTKPAEETTTTTEAPSTTTKP) has biased composition (low complexity).

The protein localises to the secreted. The chain is C-type lectin domain-containing protein 180 (clec-180) from Caenorhabditis elegans.